Consider the following 376-residue polypeptide: Chaperone protein DnaJ (376 aa).

The 66-residue stretch at 5–70 (DYYEILGVSK…QKRAAYDQYG (66 aa)) folds into the J domain. The CR-type zinc finger occupies 131–209 (GVTKEIRIPT…CHGHGRVERS (79 aa)). 8 residues coordinate Zn(2+): Cys-144, Cys-147, Cys-161, Cys-164, Cys-183, Cys-186, Cys-197, and Cys-200. CXXCXGXG motif repeat units lie at residues 144–151 (CDVCHGSG), 161–168 (CPTCHGSG), 183–190 (CPHCQGRG), and 197–204 (CNKCHGHG).

Belongs to the DnaJ family. Homodimer. Requires Zn(2+) as cofactor.

The protein localises to the cytoplasm. Its function is as follows. Participates actively in the response to hyperosmotic and heat shock by preventing the aggregation of stress-denatured proteins and by disaggregating proteins, also in an autonomous, DnaK-independent fashion. Unfolded proteins bind initially to DnaJ; upon interaction with the DnaJ-bound protein, DnaK hydrolyzes its bound ATP, resulting in the formation of a stable complex. GrpE releases ADP from DnaK; ATP binding to DnaK triggers the release of the substrate protein, thus completing the reaction cycle. Several rounds of ATP-dependent interactions between DnaJ, DnaK and GrpE are required for fully efficient folding. Also involved, together with DnaK and GrpE, in the DNA replication of plasmids through activation of initiation proteins. This is Chaperone protein DnaJ from Shigella flexneri.